A 321-amino-acid chain; its full sequence is Peroxidase 4 (321 aa).

Residues 1–25 (MASSSFSIVVVALGVLALFAGSSSA) form the signal peptide. Pyrrolidone carboxylic acid is present on Gln-26. 4 disulfides stabilise this stretch: Cys-36/Cys-116, Cys-69/Cys-74, Cys-122/Cys-317, and Cys-201/Cys-226. His-67 (proton acceptor) is an active-site residue. 5 residues coordinate Ca(2+): Asp-68, Val-71, Gly-73, Asp-75, and Ser-77. Residue Pro-164 participates in substrate binding. Residue His-194 participates in heme b binding. Thr-195 is a Ca(2+) binding site. N-linked (GlcNAc...) asparagine glycosylation occurs at Asn-210. The Ca(2+) site is built by Asp-241, Thr-244, and Asp-249.

Belongs to the peroxidase family. Classical plant (class III) peroxidase subfamily. The cofactor is heme b. Ca(2+) serves as cofactor.

Its subcellular location is the secreted. The enzyme catalyses 2 a phenolic donor + H2O2 = 2 a phenolic radical donor + 2 H2O. Its function is as follows. Removal of H(2)O(2), oxidation of toxic reductants, biosynthesis and degradation of lignin, suberization, auxin catabolism, response to environmental stresses such as wounding, pathogen attack and oxidative stress. These functions might be dependent on each isozyme/isoform in each plant tissue. This is Peroxidase 4 from Vitis vinifera (Grape).